A 403-amino-acid chain; its full sequence is Acetate kinase (403 aa).

Asn-13 provides a ligand contact to Mg(2+). Residue Lys-20 coordinates ATP. Residue Arg-94 coordinates substrate. Asp-153 (proton donor/acceptor) is an active-site residue. ATP is bound by residues 213–217, 288–290, and 336–340; these read HLGNG, DFR, and GIGEN. Mg(2+) is bound at residue Glu-390.

This sequence belongs to the acetokinase family. As to quaternary structure, homodimer. Mg(2+) serves as cofactor. Requires Mn(2+) as cofactor.

It is found in the cytoplasm. The catalysed reaction is acetate + ATP = acetyl phosphate + ADP. It participates in metabolic intermediate biosynthesis; acetyl-CoA biosynthesis; acetyl-CoA from acetate: step 1/2. Its function is as follows. Catalyzes the formation of acetyl phosphate from acetate and ATP. Can also catalyze the reverse reaction. The sequence is that of Acetate kinase from Buchnera aphidicola subsp. Schizaphis graminum (strain Sg).